Consider the following 549-residue polypeptide: Cation/acetate symporter ActP (549 aa).

13 helical membrane-spanning segments follow: residues 33-53 (WQAIIMFLIFVVFTLGITYWA), 77-97 (LAIAGDYMSAASFLGISALVF), 103-123 (GLIYSLGFLVGWPIILFLIAE), 148-168 (ILSACGSLVVVALYLIAQMVG), 183-203 (IAVVLVGVLMMMYVLFGGMLA), 206-226 (WVQIIKAVLLLFGASFMAFMV), 262-282 (ISALSLGLGLMFGTAGLPHIL), 303-323 (GFMGYFYILTFIIGFGAIMLV), 355-375 (LFLGFISAVAFATILAVVAGL), 404-424 (VSKITVLILGVIAIILGMLFE), 428-448 (IAFMVGLAFAIAASCNFPIIL), 464-484 (GGWLGLITAVVLMILGPTIWV), and 493-513 (IFPYEYPALFSISVAFLGIWF).

The protein belongs to the sodium:solute symporter (SSF) (TC 2.A.21) family.

It is found in the cell inner membrane. Functionally, transports acetate. The protein is Cation/acetate symporter ActP of Shigella boydii serotype 4 (strain Sb227).